We begin with the raw amino-acid sequence, 620 residues long: Ferric/cupric reductase transmembrane component 7 (620 aa).

Residues 1 to 45 (MIEERDLVLSNGIHCIADIHSELYARLKKESQAVTPWVYQKQYGK) lie on the Extracellular side of the membrane. Residues 46 to 66 (FVTYFVAVIIFLSLIKKLAFM) traverse the membrane as a helical segment. Over 67-107 (YYDSSEEFLPEKKNSPTTPSVFLARIMTKLVAFNRYICYRK) the chain is Cytoplasmic. The helical transmembrane segment at 108-128 (FPTLIFSYLGIPTSVGTFLVV) threads the bilayer. Over 129–167 (MATTLYTLLYCFVPHPFYRPCAGFGSPPLSVRAGIMAIS) the chain is Extracellular. A Ferric oxidoreductase domain is found at 161–320 (AGIMAISLVS…LAVKGYLRPG (160 aa)). Residues 168–188 (LVSFVFSLSGKINVIGWLVGL) form a helical membrane-spanning segment. The Cytoplasmic segment spans residues 189-194 (SYEKIN). The helical transmembrane segment at 195–215 (IYHQWASILCLFFSWVHVIPF) threads the bilayer. Residues histidine 197 and histidine 211 each contribute to the heme site. At 216–237 (LRQARHEGGYERMHQRWKASDM) the chain is on the extracellular side. Residues 238-258 (WRSGVPPILFLNLLWLSSLPI) form a helical membrane-spanning segment. Residues 259 to 265 (ARRHFYE) lie on the Cytoplasmic side of the membrane. The helical transmembrane segment at 266–286 (IFLQLHWILAVGFYISLFYHV) threads the bilayer. Residues histidine 271 and histidine 285 each contribute to the heme site. Residues 287–292 (YPELNS) lie on the Extracellular side of the membrane. A helical membrane pass occupies residues 293 to 313 (HMYLVATIVVWFAQLFYRLAV). The Cytoplasmic segment spans residues 314–620 (KGYLRPGRSF…CYLHSESFGY (307 aa)). An FAD-binding FR-type domain is found at 321 to 419 (RSFMASTIAN…DGPYGGIERD (99 aa)). 369-375 (HPFSIFP) lines the FAD pocket. Residues 519 to 544 (SDQSDLAKREKDTEFGQDDTESNSTF) are disordered. Over residues 523–532 (DLAKREKDTE) the composition is skewed to basic and acidic residues.

Belongs to the ferric reductase (FRE) family. FAD is required as a cofactor.

It localises to the cell membrane. The catalysed reaction is 2 a Fe(II)-siderophore + NADP(+) + H(+) = 2 a Fe(III)-siderophore + NADPH. Cell surface metalloreductase. May be involved in copper homeostasis. This Saccharomyces cerevisiae (strain YJM789) (Baker's yeast) protein is Ferric/cupric reductase transmembrane component 7 (FRE7).